A 628-amino-acid chain; its full sequence is Glutamine--fructose-6-phosphate aminotransferase [isomerizing] (628 aa).

The Nucleophile; for GATase activity role is filled by C2. Residues 2–229 (CGIVGYVGHR…QDQAVVLTAD (228 aa)) enclose the Glutamine amidotransferase type-2 domain. Residues 61 to 94 (ETDSNDGDGLGGSTGLGHTRWATHGRPTDRNAHP) are disordered. SIS domains follow at residues 301–440 (SDQE…ARGT) and 473–618 (LAER…VDKP). K623 (for Fru-6P isomerization activity) is an active-site residue.

Homodimer.

The protein localises to the cytoplasm. The enzyme catalyses D-fructose 6-phosphate + L-glutamine = D-glucosamine 6-phosphate + L-glutamate. In terms of biological role, catalyzes the first step in hexosamine metabolism, converting fructose-6P into glucosamine-6P using glutamine as a nitrogen source. The chain is Glutamine--fructose-6-phosphate aminotransferase [isomerizing] from Mycolicibacterium smegmatis (strain ATCC 700084 / mc(2)155) (Mycobacterium smegmatis).